The following is a 318-amino-acid chain: Probable cell division protein WhiA (318 aa).

Positions 281–314 form a DNA-binding region, H-T-H motif; the sequence is SLKELGQMLVPPVGKSGVNHRLRKIEEISKKLKE.

The protein belongs to the WhiA family.

Functionally, involved in cell division and chromosome segregation. This chain is Probable cell division protein WhiA, found in Thermoanaerobacter sp. (strain X514).